The primary structure comprises 182 residues: ATP-dependent protease subunit HslV (182 aa).

T12 is a catalytic residue. Na(+) is bound by residues A167, C170, and T173.

Belongs to the peptidase T1B family. HslV subfamily. As to quaternary structure, a double ring-shaped homohexamer of HslV is capped on each side by a ring-shaped HslU homohexamer. The assembly of the HslU/HslV complex is dependent on binding of ATP.

It is found in the cytoplasm. It carries out the reaction ATP-dependent cleavage of peptide bonds with broad specificity.. With respect to regulation, allosterically activated by HslU binding. Functionally, protease subunit of a proteasome-like degradation complex believed to be a general protein degrading machinery. In Chlorobium phaeovibrioides (strain DSM 265 / 1930) (Prosthecochloris vibrioformis (strain DSM 265)), this protein is ATP-dependent protease subunit HslV.